The primary structure comprises 725 residues: MAMDSSLQARLFPGLAIKIQRSNGLIHSANVRTVNLEKSCVSVEWAEGGATKGKEIDFDDVAAINPELLQLLPLHPKDNLPLQENVTIQKQKRRSVNSKIPAPKESLRSRSTRMSTVSELRITAQENDMEVELPAAANSRKQFSVPPAPTRPSCPAVAEIPLRMVSEEMEEQVHSIRGSSSANPVNSVRRKSCLVKEVEKMKNKREEKKAQNSEMRMKRAQEYDSSFPNWEFARMIKEFRATLECHPLTMTDPIEEHRICVCVRKRPLNKQELAKKEIDVISIPSKCLLLVHEPKLKVDLTKYLENQAFCFDFAFDETASNEVVYRFTARPLVQTIFEGGKATCFAYGQTGSGKTHTMGGDLSGKAQNASKGIYAMASRDVFLLKNQPCYRKLGLEVYVTFFEIYNGKLFDLLNKKAKLRVLEDGKQQVQVVGLQEHLVNSADDVIKMIDMGSACRTSGQTFANSNSSRSHACFQIILRAKGRMHGKFSLVDLAGNERGADTSSADRQTRMEGAEINKSLLALKECIRALGQNKAHTPFRESKLTQVLRDSFIGENSRTCMIATISPGISSCEYTLNTLRYADRVKELSPHSGPSGEQLIQMETEEMEACSNGALIPGNLSKEEEELSSQMSSFNEAMTQIRELEEKAMEELKEIIQQGPDWLELSEMTEQPDYDLETFVNKAESALAQQAKHFSALRDVIKALRLAMQLEEQASRQISSKKRPQ.

Position 2 is an N-acetylalanine (Ala2). Residues 2-254 are globular; it reads AMDSSLQARL…CHPLTMTDPI (253 aa). Phosphoserine is present on residues Ser6 and Ser22. The segment at 89 to 116 is disordered; that stretch reads QKQKRRSVNSKIPAPKESLRSRSTRMST. At Ser95 the chain carries Phosphoserine; by AURKB. The Microtubule tip localization signal signature appears at 98 to 101; the sequence is SKIP. 8 positions are modified to phosphoserine: Ser106, Ser109, Ser111, Ser115, Ser166, Ser175, Ser187, and Ser192. Residues 207–238 form a negative regulator of microtubule-binding region; that stretch reads EKKAQNSEMRMKRAQEYDSSFPNWEFARMIKE. The Kinesin motor domain occupies 258 to 588; it reads RICVCVRKRP…LRYADRVKEL (331 aa). ATP-binding positions include Arg264 and 348–355; that span reads GQTGSGKT. Residues 415-418 carry the Nuclear localization signal motif; it reads KKAK. Residues Ser519, Ser621, and Ser633 each carry the phosphoserine modification. Residues 618-658 adopt a coiled-coil conformation; it reads GNLSKEEEELSSQMSSFNEAMTQIRELEEKAMEELKEIIQQ.

The protein belongs to the TRAFAC class myosin-kinesin ATPase superfamily. Kinesin family. MCAK/KIF2 subfamily. As to quaternary structure, interacts with CENPH. Interacts with MTUS2/TIP150; the interaction is direct. Interacts with MAPRE1; the interaction is direct, regulated by phosphorylation and is probably required for targeting to growing microtubule plus ends. Interacts with KIF18B at microtubule tips; this interaction increases the affinity of both partners for microtubule plus ends and is required for robust microtubule depolymerization. Phosphorylation by AURKA or AURKB strongly reduces KIF18B-binding. In terms of processing, phosphorylation by AURKB, regulates association with centromeres and kinetochores and the microtubule depolymerization activity. Post-translationally, ubiquitinated. In terms of tissue distribution, expressed at high levels in thymus and testis, at low levels in small intestine, the mucosal lining of colon, and placenta, and at very low levels in spleen and ovary; expression is not detected in prostate, peripheral blood Leukocytes, heart, brain, lung, liver, skeletal muscle, kidney or pancreas. Isoform 2 is testis-specific.

The protein localises to the cytoplasm. Its subcellular location is the cytoskeleton. The protein resides in the nucleus. It localises to the chromosome. It is found in the centromere. The protein localises to the kinetochore. Its function is as follows. In complex with KIF18B, constitutes the major microtubule plus-end depolymerizing activity in mitotic cells. Regulates the turnover of microtubules at the kinetochore and functions in chromosome segregation during mitosis. Plays a role in chromosome congression and is required for the lateral to end-on conversion of the chromosome-microtubule attachment. This chain is Kinesin-like protein KIF2C (KIF2C), found in Homo sapiens (Human).